Consider the following 427-residue polypeptide: Peptidase B (427 aa).

Residues Lys195 and Asp200 each contribute to the Mn(2+) site. The active site involves Lys207. Mn(2+) is bound by residues Asp218, Asp277, and Glu279. Arg281 is a catalytic residue.

It belongs to the peptidase M17 family. In terms of assembly, homohexamer. Mn(2+) is required as a cofactor.

It is found in the cytoplasm. The catalysed reaction is Release of an N-terminal amino acid, Xaa, from a peptide or arylamide. Xaa is preferably Glu or Asp but may be other amino acids, including Leu, Met, His, Cys and Gln.. Functionally, probably plays an important role in intracellular peptide degradation. The sequence is that of Peptidase B from Escherichia coli (strain K12 / MC4100 / BW2952).